We begin with the raw amino-acid sequence, 352 residues long: Neutral protease 2 homolog ATEG_04941 (352 aa).

Positions 1 to 19 are cleaved as a signal peptide; it reads MRFTALATAILPLACNVLA. The propeptide occupies 20 to 175; sequence LPAKTGEAPK…ASAVKPLDKR (156 aa). 2 cysteine pairs are disulfide-bonded: Cys181–Cys253 and Cys260–Cys278. A Zn(2+)-binding site is contributed by His303. Residue Glu304 is part of the active site. Zn(2+) contacts are provided by His307 and Asp318.

It belongs to the peptidase M35 family. It depends on Zn(2+) as a cofactor.

The protein localises to the secreted. It catalyses the reaction Preferential cleavage of bonds with hydrophobic residues in P1'. Also 3-Asn-|-Gln-4 and 8-Gly-|-Ser-9 bonds in insulin B chain.. In terms of biological role, secreted metalloproteinase that allows assimilation of proteinaceous substrates. Shows high activities on basic nuclear substrates such as histone and protamine. The polypeptide is Neutral protease 2 homolog ATEG_04941 (Aspergillus terreus (strain NIH 2624 / FGSC A1156)).